The sequence spans 395 residues: MAATCEISNVFSNYFNAMYSSEDPTLAPAPLTTFGTEDFVLTLNNQHMSPEGPVGCVGPQTRSQRDRTEPPAVLHLAEKASWTGERPQFWSKTQVLDWISYQVEKNKYDASSIDFSRCDMDGATLCNCALEELRLVFGPLGDQLHAQLRDLTSSSSDELSWIIELLEKDGMTFQEGLGDSGPFDQGSPFAQELLDDGRQASPYYGSSYGPGAPSPGSSDFSTSGTDTPQSSHSSDSGGSDVDLDLTDSKVFPRDGFPDYKKGEPKHGKRKRGRPRKLSKEYWDCLEGKKSKHAPRGTHLWEFIRDILIHPELNEGLMKWENRHEGVFKFLRSEAVAQLWGQKKKNSNMTYEKLSRAMRYYYKREILERVDGRRLVYKFGKNSSGWKEEEVGESQN.

The PNT domain maps to 69–155 (EPPAVLHLAE…AQLRDLTSSS (87 aa)). Residues 200–240 (ASPYYGSSYGPGAPSPGSSDFSTSGTDTPQSSHSSDSGGSD) are compositionally biased toward low complexity. The tract at residues 200 to 275 (ASPYYGSSYG…HGKRKRGRPR (76 aa)) is disordered. Over residues 246 to 265 (TDSKVFPRDGFPDYKKGEPK) the composition is skewed to basic and acidic residues. Positions 266 to 275 (HGKRKRGRPR) are enriched in basic residues. Positions 297-379 (THLWEFIRDI…DGRRLVYKFG (83 aa)) form a DNA-binding region, ETS.

It belongs to the ETS family. As to quaternary structure, interacts with TBP. Interacts with CREBBP and EP300; these act as transcriptional coactivators of ELF3 and positively modulate its function. Interacts with XRCC5/KU86 and XRCC6/KU70; these inhibit the ability of ELF3 to bind DNA and negatively modulate its transcriptional activity. Associated with CLND7 and POU2F3. Interacts with ZNF768.

The protein localises to the cytoplasm. The protein resides in the nucleus. Functionally, transcriptional activator that binds and transactivates ETS sequences containing the consensus nucleotide core sequence GGA[AT]. Acts synergistically with POU2F3 to transactivate the SPRR2A promoter and with RUNX1 to transactivate the ANGPT1 promoter. Also transactivates collagenase, CCL20, CLND7, FLG, KRT8, NOS2, PTGS2, SPRR2B, TGFBR2 and TGM3 promoters. Represses KRT4 promoter activity. Involved in mediating vascular inflammation. May play an important role in epithelial cell differentiation and tumorigenesis. May be a critical downstream effector of the ERBB2 signaling pathway. May be associated with mammary gland development and involution. Plays an important role in the regulation of transcription with TATA-less promoters in preimplantation embryos, which is essential in preimplantation development. The protein is ETS-related transcription factor Elf-3 of Rattus norvegicus (Rat).